Consider the following 273-residue polypeptide: NADPH-dependent 7-cyano-7-deazaguanine reductase (273 aa).

80 to 82 contacts substrate; that stretch reads VES. 82-83 lines the NADPH pocket; the sequence is SK. Cys-180 functions as the Thioimide intermediate in the catalytic mechanism. Residue Asp-187 is the Proton donor of the active site. 219 to 220 contributes to the substrate binding site; the sequence is HE. 248–249 is an NADPH binding site; that stretch reads RG.

The protein belongs to the GTP cyclohydrolase I family. QueF type 2 subfamily. As to quaternary structure, homodimer.

The protein localises to the cytoplasm. The enzyme catalyses 7-aminomethyl-7-carbaguanine + 2 NADP(+) = 7-cyano-7-deazaguanine + 2 NADPH + 3 H(+). It participates in tRNA modification; tRNA-queuosine biosynthesis. Its function is as follows. Catalyzes the NADPH-dependent reduction of 7-cyano-7-deazaguanine (preQ0) to 7-aminomethyl-7-deazaguanine (preQ1). The chain is NADPH-dependent 7-cyano-7-deazaguanine reductase from Bordetella pertussis (strain Tohama I / ATCC BAA-589 / NCTC 13251).